The chain runs to 1923 residues: Nuclear pore complex protein GP210 (1923 aa).

An N-terminal signal peptide occupies residues Met1–Ser22. Asn73, Asn117, Asn289, Asn609, Asn863, Asn903, Asn967, Asn982, Asn1171, Asn1199, Asn1550, Asn1568, and Asn1743 each carry an N-linked (GlcNAc...) asparagine glycan. One can recognise a BIG2 domain in the interval Ile1152–Thr1205. Residues Ser1829 to Met1849 traverse the membrane as a helical segment.

The protein belongs to the NUP210 family. In terms of assembly, part of the nuclear pore complex (NPC). The NPC has an eight-fold symmetrical structure comprising a central transport channel and two rings, the cytoplasmic and nuclear rings, to which eight filaments are attached. The cytoplasmic filaments have loose ends, while the nuclear filaments are joined in a distal ring, forming a nuclear basket. NPCs are highly dynamic in configuration and composition, and can be devided in 3 subcomplexes, the NUP62 subcomplex, the NUP107-160 subcomplex and the NUP93 subcomplex, containing approximately 30 different nucleoporin proteins.

Its subcellular location is the nucleus envelope. It is found in the nucleus membrane. The protein localises to the nucleus. It localises to the nuclear pore complex. This Arabidopsis thaliana (Mouse-ear cress) protein is Nuclear pore complex protein GP210.